The primary structure comprises 331 residues: Probable transcriptional regulatory protein At2g25830 (331 aa).

Belongs to the TACO1 family.

This chain is Probable transcriptional regulatory protein At2g25830, found in Arabidopsis thaliana (Mouse-ear cress).